Reading from the N-terminus, the 388-residue chain is Phosphopentomutase (388 aa).

6 residues coordinate Mn(2+): Asp-10, Asp-282, His-287, Asp-323, His-324, and His-335.

This sequence belongs to the phosphopentomutase family. It depends on Mn(2+) as a cofactor.

It is found in the cytoplasm. The enzyme catalyses 2-deoxy-alpha-D-ribose 1-phosphate = 2-deoxy-D-ribose 5-phosphate. It carries out the reaction alpha-D-ribose 1-phosphate = D-ribose 5-phosphate. It participates in carbohydrate degradation; 2-deoxy-D-ribose 1-phosphate degradation; D-glyceraldehyde 3-phosphate and acetaldehyde from 2-deoxy-alpha-D-ribose 1-phosphate: step 1/2. Its function is as follows. Isomerase that catalyzes the conversion of deoxy-ribose 1-phosphate (dRib-1-P) and ribose 1-phosphate (Rib-1-P) to deoxy-ribose 5-phosphate (dRib-5-P) and ribose 5-phosphate (Rib-5-P), respectively. This is Phosphopentomutase from Acetivibrio thermocellus (strain ATCC 27405 / DSM 1237 / JCM 9322 / NBRC 103400 / NCIMB 10682 / NRRL B-4536 / VPI 7372) (Clostridium thermocellum).